The following is a 384-amino-acid chain: MSSYLFTSESVSEGHPDKIADQISDAVLDEILRQDPKARVACETYVKTGMALVGGEITTSAWVDIENLTRQVICDIGYKHSDIGFDGHSCAVLNAIGKQSSDINQGVDRESPLDQGAGDQGIMFGYATNETDVLMPAAITYAHRLMERQAQVRKKGILDWLRPDAKSQVTLKYEDNRIVGIDAVVLSTQHSDNVDQKTVHEGVMEEIIKPILPAEWLSKETKYFINPTGRFVIGGPMGDCGLTGRKIIVDTYGGAARHGGGAFSGKDPSKVDRSAAYAARYVAKNIVAAGLADRCEIQLSYAIGVAEPTSIMVETFGTGKVANELLVGLIREFFDLRPYGLIKMLDLIQPIYRQTAAYGHFGRAQFPWEKVDRAEELRAAASLK.

His15 contributes to the ATP binding site. A Mg(2+)-binding site is contributed by Asp17. Glu43 is a binding site for K(+). Positions 56 and 99 each coordinate L-methionine. Residues 99 to 109 form a flexible loop region; it reads QSSDINQGVDR. ATP is bound by residues 164 to 166, 230 to 231, Asp239, 245 to 246, Ala262, and Lys266; these read DAK, RF, and RK. Residue Asp239 coordinates L-methionine. Position 270 (Lys270) interacts with L-methionine.

This sequence belongs to the AdoMet synthase family. Homotetramer; dimer of dimers. It depends on Mg(2+) as a cofactor. K(+) is required as a cofactor.

The protein localises to the cytoplasm. It catalyses the reaction L-methionine + ATP + H2O = S-adenosyl-L-methionine + phosphate + diphosphate. It functions in the pathway amino-acid biosynthesis; S-adenosyl-L-methionine biosynthesis; S-adenosyl-L-methionine from L-methionine: step 1/1. Its function is as follows. Catalyzes the formation of S-adenosylmethionine (AdoMet) from methionine and ATP. The overall synthetic reaction is composed of two sequential steps, AdoMet formation and the subsequent tripolyphosphate hydrolysis which occurs prior to release of AdoMet from the enzyme. This is S-adenosylmethionine synthase from Histophilus somni (strain 129Pt) (Haemophilus somnus).